We begin with the raw amino-acid sequence, 121 residues long: uncharacterized protein (121 aa).

The disordered stretch occupies residues 100–121; that stretch reads KSFSNTKDGKKNDDDNNSSSKS.

This is an uncharacterized protein from Mycoplasma pneumoniae (strain ATCC 29342 / M129 / Subtype 1) (Mycoplasmoides pneumoniae).